We begin with the raw amino-acid sequence, 484 residues long: Ubiquinone biosynthesis monooxygenase COQ6, mitochondrial (484 aa).

The N-terminal 41 residues, 1–41 (MLSLAKAKLAVVGIGRQCVAVRTLNGARAVHRSFSSSEHDQ), are a transit peptide targeting the mitochondrion.

Belongs to the UbiH/COQ6 family. As to quaternary structure, component of a multi-subunit COQ enzyme complex, composed of at least coq3, coq4, coq5, coq6, coq7 and coq9. Interacts with coq8b and coq7. The cofactor is FAD.

It localises to the mitochondrion inner membrane. Its subcellular location is the golgi apparatus. The protein localises to the cell projection. The enzyme catalyses a 4-hydroxy-3-(all-trans-polyprenyl)benzoate + 2 reduced [2Fe-2S]-[ferredoxin] + O2 + 2 H(+) = a 3,4-dihydroxy-5-(all-trans-polyprenyl)benzoate + 2 oxidized [2Fe-2S]-[ferredoxin] + H2O. It carries out the reaction a 2-methoxy-6-(all-trans-polyprenyl)phenol + 2 reduced [2Fe-2S]-[ferredoxin] + O2 + 2 H(+) = a 2-methoxy-6-(all-trans-polyprenyl)benzene-1,4-diol + 2 oxidized [2Fe-2S]-[ferredoxin] + H2O. The protein operates within cofactor biosynthesis; ubiquinone biosynthesis. Its function is as follows. FAD-dependent monooxygenase required for two non-consecutive steps during ubiquinone biosynthesis. Required for the C5-ring hydroxylation during ubiquinone biosynthesis by catalyzing the hydroxylation of 4-hydroxy-3-(all-trans-polyprenyl)benzoic acid to 3,4-dihydroxy-5-(all-trans-polyprenyl)benzoic acid. Also acts downstream of coq4, for the C1-hydroxylation during ubiquinone biosynthesis by catalyzing the hydroxylation of 2-methoxy-6-(all-trans-polyprenyl)phenol to 2-methoxy-6-(all-trans-polyprenyl)benzene-1,4-diol. The electrons required for the hydroxylation reaction are funneled indirectly to coq6 from NADPH via a ferredoxin/ferredoxin reductase system. In Danio rerio (Zebrafish), this protein is Ubiquinone biosynthesis monooxygenase COQ6, mitochondrial.